Consider the following 258-residue polypeptide: Glucanase inhibitor protein 1 (258 aa).

The first 19 residues, 1–19, serve as a signal peptide directing secretion; sequence MRVVPTLAAASLALGAVAG. The Peptidase S1 domain occupies 27 to 254; sequence ILGGGEVPIG…AIEWITSVTK (228 aa). A disulfide bridge connects residues Cys-54 and Cys-70. N-linked (GlcNAc...) asparagine glycosylation is found at Asn-87, Asn-102, Asn-107, Asn-157, and Asn-185. Cystine bridges form between Cys-177/Cys-189 and Cys-199/Cys-230.

This sequence belongs to the peptidase S1 family. Forms an apoplastic complex with host endoglucanases in tomato leaves during P.infestans infection.

The protein localises to the secreted. Secreted effector that suppresses host plant glucan elicitor-mediated defense responses. Targets host endoglucanases and inhibits the endoglucanase-mediated release of elicitor-active glucan oligosaccharides from P.infestans cell walls. The polypeptide is Glucanase inhibitor protein 1 (Phytophthora infestans (Potato late blight agent)).